A 66-amino-acid polypeptide reads, in one-letter code: Putative antitoxin APE_0279a.1 (66 aa).

This sequence belongs to the UPF0165 family.

In terms of biological role, possibly the antitoxin component of a type II toxin-antitoxin (TA) system. The sequence is that of Putative antitoxin APE_0279a.1 from Aeropyrum pernix (strain ATCC 700893 / DSM 11879 / JCM 9820 / NBRC 100138 / K1).